Reading from the N-terminus, the 166-residue chain is Large ribosomal subunit protein uL10 (166 aa).

Belongs to the universal ribosomal protein uL10 family. As to quaternary structure, part of the ribosomal stalk of the 50S ribosomal subunit. The N-terminus interacts with L11 and the large rRNA to form the base of the stalk. The C-terminus forms an elongated spine to which L12 dimers bind in a sequential fashion forming a multimeric L10(L12)X complex.

Functionally, forms part of the ribosomal stalk, playing a central role in the interaction of the ribosome with GTP-bound translation factors. The chain is Large ribosomal subunit protein uL10 from Oceanobacillus iheyensis (strain DSM 14371 / CIP 107618 / JCM 11309 / KCTC 3954 / HTE831).